The following is a 105-amino-acid chain: Replication initiation control protein YabA (105 aa).

Zn(2+) contacts are provided by histidine 79, cysteine 81, cysteine 95, and cysteine 98.

This sequence belongs to the YabA family. As to quaternary structure, homotetramer. Interacts with both DnaA and DnaN, acting as a bridge between these two proteins. Zn(2+) is required as a cofactor.

The protein localises to the cytoplasm. Its subcellular location is the nucleoid. Functionally, involved in control of chromosome replication initiation. Inhibits the cooperative binding of DnaA to the oriC region, thus negatively regulating initiation of chromosome replication. Inhibits the ability of DnaA-ATP to form a helix on DNA; does not disassemble preformed DnaA-DNA helices. Decreases the residence time of DnaA on the chromosome at its binding sites (oriC, replication forks and promoter-binding sites). Tethers DnaA to the replication machinery via the DNA polymerase beta sliding clamp subunit (dnaN). Associates with oriC and other DnaA targets on the chromosome in a DnaA-dependent manner. In Streptococcus suis (strain 98HAH33), this protein is Replication initiation control protein YabA.